Consider the following 476-residue polypeptide: Aspartyl/glutamyl-tRNA(Asn/Gln) amidotransferase subunit B (476 aa).

It belongs to the GatB/GatE family. GatB subfamily. As to quaternary structure, heterotrimer of A, B and C subunits.

It catalyses the reaction L-glutamyl-tRNA(Gln) + L-glutamine + ATP + H2O = L-glutaminyl-tRNA(Gln) + L-glutamate + ADP + phosphate + H(+). The enzyme catalyses L-aspartyl-tRNA(Asn) + L-glutamine + ATP + H2O = L-asparaginyl-tRNA(Asn) + L-glutamate + ADP + phosphate + 2 H(+). Allows the formation of correctly charged Asn-tRNA(Asn) or Gln-tRNA(Gln) through the transamidation of misacylated Asp-tRNA(Asn) or Glu-tRNA(Gln) in organisms which lack either or both of asparaginyl-tRNA or glutaminyl-tRNA synthetases. The reaction takes place in the presence of glutamine and ATP through an activated phospho-Asp-tRNA(Asn) or phospho-Glu-tRNA(Gln). This is Aspartyl/glutamyl-tRNA(Asn/Gln) amidotransferase subunit B from Neisseria meningitidis serogroup C (strain 053442).